The chain runs to 1141 residues: DNA-directed RNA polymerase subunit beta (1141 aa).

This sequence belongs to the RNA polymerase beta chain family. In terms of assembly, the RNAP catalytic core consists of 2 alpha, 1 beta, 1 beta' and 1 omega subunit. When a sigma factor is associated with the core the holoenzyme is formed, which can initiate transcription.

The catalysed reaction is RNA(n) + a ribonucleoside 5'-triphosphate = RNA(n+1) + diphosphate. Functionally, DNA-dependent RNA polymerase catalyzes the transcription of DNA into RNA using the four ribonucleoside triphosphates as substrates. This chain is DNA-directed RNA polymerase subunit beta, found in Frankia alni (strain DSM 45986 / CECT 9034 / ACN14a).